The following is a 300-amino-acid chain: uncharacterized protein (300 aa).

Residues 1 to 7 (MGSTRKG) lie on the Periplasmic side of the membrane. A helical membrane pass occupies residues 8 to 28 (MLNVLIAAVLWGSSGVCAQYI). The EamA 1 domain occupies 16 to 145 (VLWGSSGVCA…SLIGTFLLVT (130 aa)). The Cytoplasmic segment spans residues 29–45 (MEQSRMSSQFLTMIRLL). A helical transmembrane segment spans residues 46–66 (FAGLILVTFSFMHGDKIFSIL). The Periplasmic portion of the chain corresponds to 67–71 (KNRKD). A helical transmembrane segment spans residues 72–92 (ALSLLIFSVVGALTVQLTFLL). At 93–99 (TIEKSNA) the chain is on the cytoplasmic side. A helical transmembrane segment spans residues 100-120 (ATATVLQFLSPTIIVAWFALA). Residues 121–124 (RRTR) lie on the Periplasmic side of the membrane. The chain crosses the membrane as a helical span at residues 125-145 (PGILVLTAILTSLIGTFLLVT). Residues 146-151 (HGNPTS) lie on the Cytoplasmic side of the membrane. The helical transmembrane segment at 152 to 172 (LSISSAALFWGIASAFAAAFY) threads the bilayer. Residues 167 to 291 (FAAAFYTTWP…ILSSVILISL (125 aa)) enclose the EamA 2 domain. The Periplasmic segment spans residues 173 to 184 (TTWPSRLIAQYG). Residues 185 to 205 (TLPVVGWSMSFGGLILLPFYA) form a helical membrane-spanning segment. The Cytoplasmic portion of the chain corresponds to 206-216 (KEGTHFAVSGS). Residues 217-237 (LILAFFYLVVIGTSLTFSLYL) traverse the membrane as a helical segment. Residues 238-263 (KGAQLIGGPKASILSCAEPLSSALLS) lie on the Periplasmic side of the membrane. A helical membrane pass occupies residues 264-284 (LLLLGISFTLPDWLGTLLILS). The Cytoplasmic portion of the chain corresponds to 285 to 300 (SVILISLDSRRRARAA).

This sequence belongs to the EamA transporter family.

The protein resides in the cell inner membrane. This is an uncharacterized protein from Salmonella typhimurium (strain LT2 / SGSC1412 / ATCC 700720).